A 129-amino-acid polypeptide reads, in one-letter code: Small ribosomal subunit protein uS9 (129 aa).

It belongs to the universal ribosomal protein uS9 family.

The polypeptide is Small ribosomal subunit protein uS9 (Helicobacter pylori (strain Shi470)).